The sequence spans 591 residues: Aspartate--tRNA(Asp/Asn) ligase (591 aa).

Glu176 contributes to the L-aspartate binding site. The tract at residues 200–203 (QLFK) is aspartate. An L-aspartate-binding site is contributed by Arg222. ATP contacts are provided by residues 222–224 (RDE) and Gln231. His450 contacts L-aspartate. Residue Glu484 participates in ATP binding. Residue Arg491 participates in L-aspartate binding. 536–539 (GLDR) contributes to the ATP binding site.

This sequence belongs to the class-II aminoacyl-tRNA synthetase family. Type 1 subfamily. As to quaternary structure, homodimer.

It is found in the cytoplasm. The enzyme catalyses tRNA(Asx) + L-aspartate + ATP = L-aspartyl-tRNA(Asx) + AMP + diphosphate. Its function is as follows. Aspartyl-tRNA synthetase with relaxed tRNA specificity since it is able to aspartylate not only its cognate tRNA(Asp) but also tRNA(Asn). Reaction proceeds in two steps: L-aspartate is first activated by ATP to form Asp-AMP and then transferred to the acceptor end of tRNA(Asp/Asn). In Bacillus anthracis (strain A0248), this protein is Aspartate--tRNA(Asp/Asn) ligase.